A 164-amino-acid polypeptide reads, in one-letter code: Large ribosomal subunit protein bL9 (164 aa).

Belongs to the bacterial ribosomal protein bL9 family.

Its function is as follows. Binds to the 23S rRNA. This chain is Large ribosomal subunit protein bL9, found in Borrelia recurrentis (strain A1).